The primary structure comprises 307 residues: Non-homologous end joining protein Ku (307 aa).

Residues 11 to 179 form the Ku domain; sequence LSFGLVSIPV…EVRSMKDLNI (169 aa). Low complexity-rich tracts occupy residues 257-267 and 290-307; these read RGGAKAKPAAA and ARAPKSPAEAPAKVRARK. A disordered region spans residues 257–307; the sequence is RGGAKAKPAAAPRRKAPEPVAGMAEATRARKPAARAPKSPAEAPAKVRARK.

It belongs to the prokaryotic Ku family. As to quaternary structure, homodimer. Interacts with LigD.

With LigD forms a non-homologous end joining (NHEJ) DNA repair enzyme, which repairs dsDNA breaks with reduced fidelity. Binds linear dsDNA with 5'- and 3'- overhangs but not closed circular dsDNA nor ssDNA. Recruits and stimulates the ligase activity of LigD. The protein is Non-homologous end joining protein Ku of Paraburkholderia phymatum (strain DSM 17167 / CIP 108236 / LMG 21445 / STM815) (Burkholderia phymatum).